Consider the following 63-residue polypeptide: Conotoxin Cal6.28 (63 aa).

A signal peptide spans 1 to 22 (MKLTCVLIVAVLILTACQVIAA). Disulfide bonds link C34–C45, C37–C51, and C44–C58.

Belongs to the conotoxin O1 superfamily. As to expression, expressed by the venom duct.

It is found in the secreted. Functionally, probable neurotoxin. This is Conotoxin Cal6.28 from Californiconus californicus (California cone).